We begin with the raw amino-acid sequence, 231 residues long: Probable transglycosylase SceD (231 aa).

Residues 1–27 form the signal peptide; sequence MKKTLLASSLAVGLGIVAGNAGHEAHA. Residues 106 to 116 show a composition bias toward polar residues; that stretch reads AVQANQVQSQE. Residues 106–153 are disordered; the sequence is AVQANQVQSQEVEAPQNAQTQQPQASTSNNSQVTATPTESKSSEGSSV. Over residues 119 to 137 the composition is skewed to low complexity; sequence APQNAQTQQPQASTSNNSQ. Polar residues predominate over residues 138 to 153; it reads VTATPTESKSSEGSSV.

It belongs to the transglycosylase family. SceD subfamily.

It is found in the secreted. Functionally, is able to cleave peptidoglycan and affects clumping and separation of bacterial cells. This chain is Probable transglycosylase SceD (sceD), found in Staphylococcus aureus (strain USA300).